Reading from the N-terminus, the 114-residue chain is Large ribosomal subunit protein bL19 (114 aa).

The protein belongs to the bacterial ribosomal protein bL19 family.

In terms of biological role, this protein is located at the 30S-50S ribosomal subunit interface and may play a role in the structure and function of the aminoacyl-tRNA binding site. This is Large ribosomal subunit protein bL19 from Acidithiobacillus ferrooxidans (strain ATCC 23270 / DSM 14882 / CIP 104768 / NCIMB 8455) (Ferrobacillus ferrooxidans (strain ATCC 23270)).